The following is a 331-amino-acid chain: Cytoplasmic envelopment protein 1 (331 aa).

This sequence belongs to the herpesviridae cytoplasmic envelopment protein 1 family. In terms of assembly, interacts with protein ORF7; this interaction localizes protein ORF53 to the host trans-Golgi network (TGN).

Its subcellular location is the virion. The protein resides in the virion tegument. It localises to the host cytoplasm. The protein localises to the host Golgi apparatus. Plays a critical role in cytoplasmic virus egress. Participates in the final step of tegumentation and envelope acquisition within the host cytoplasm. In Varicella-zoster virus (strain Dumas) (HHV-3), this protein is Cytoplasmic envelopment protein 1 (ORF53).